Consider the following 583-residue polypeptide: Propane 2-monooxygenase operon transcriptional activator MimR (583 aa).

Positions 320-513 (LAGQSSSFRR…LRHVLTETVR (194 aa)) constitute a Sigma-54 factor interaction domain. Residues 349–356 (ERGSGRTY) and 395–404 (SADFAVIVSD) contribute to the ATP site.

Its function is as follows. Acts as a transcriptional activator of the mimABCD operon encoding the propane 2-monooxygenase complex. This Mycolicibacterium smegmatis (strain ATCC 700084 / mc(2)155) (Mycobacterium smegmatis) protein is Propane 2-monooxygenase operon transcriptional activator MimR.